The sequence spans 526 residues: TBC1 domain family member 19 (526 aa).

In terms of domain architecture, Rab-GAP TBC spans 251–472; that stretch reads GSPTALRAEL…LLWDRILGYN (222 aa).

May act as a GTPase-activating protein for Rab family protein(s). This Homo sapiens (Human) protein is TBC1 domain family member 19 (TBC1D19).